The sequence spans 480 residues: Glycerol-3-phosphate transporter (480 aa).

Topologically, residues 1-36 are cytoplasmic; it reads MFGPFKPAPHIAELPAEKIDSTYKRLRWQVFAGIFF. The helical transmembrane segment at 37–57 threads the bilayer; that stretch reads GYAAYYFVRANFDLAQPGLIQ. Residues 58–64 are Periplasmic-facing; the sequence is AGLYSKA. A helical transmembrane segment spans residues 65–85; sequence ELGVIGSAAGLAYGLSKFVMA. The Cytoplasmic portion of the chain corresponds to 86 to 94; sequence GMSDRSNPR. A helical membrane pass occupies residues 95–113; it reads VFLPFGLLLSGLCMTLMGL. Residues 114–121 are Periplasmic-facing; the sequence is FPWATSGI. A helical membrane pass occupies residues 122 to 142; the sequence is AIMWVMIFLNGWFQGMGWPPC. Residues 143–161 are Cytoplasmic-facing; that stretch reads GRTMVHWWSKSERGTIVSI. The chain crosses the membrane as a helical span at residues 162-181; that stretch reads WNTAHNIGGMVPGAMVLLAS. Topologically, residues 182–201 are periplasmic; it reads AIFFSTHGIEAQAKDVWQQS. A helical transmembrane segment spans residues 202–219; sequence LYFPGIAAMIFAIPVYFV. The Cytoplasmic portion of the chain corresponds to 220–274; the sequence is MRDTPQSCGLPSIEKWRNDYPDDYNEKTYENDLTAKEIFVTYVLKNKLLWYIAIA. A helical membrane pass occupies residues 275–295; it reads NVFVYLIRYGVLKWSPVYLSE. At 296–300 the chain is on the periplasmic side; that stretch reads VKHFN. Residues 301–321 traverse the membrane as a helical segment; it reads IKGTAWAYTIYELAAVPGTLL. The Cytoplasmic portion of the chain corresponds to 322–334; that stretch reads CGWVSDKVFKGKR. Residues 335–354 traverse the membrane as a helical segment; it reads GLTGFIFMILTTAAVVAYWM. Topologically, residues 355–359 are periplasmic; it reads NPATP. A helical membrane pass occupies residues 360 to 396; that stretch reads EAELANYSAWYENPYQLTDFVLMTLIGFLIYGPVMLI. Residues 397-415 lie on the Cytoplasmic side of the membrane; the sequence is GLHALELAPKKAAGTAAGF. The helical transmembrane segment at 416-437 threads the bilayer; that stretch reads TGLFGYLGGTVSASAVIGWAAQ. The Periplasmic segment spans residues 438–442; the sequence is HYGWD. A helical transmembrane segment spans residues 443–463; that stretch reads GGFYVMIGGGVLAVLLLLIVM. The Cytoplasmic portion of the chain corresponds to 464–479; it reads VEEGKHKAKLGDTYGT.

Belongs to the major facilitator superfamily. Organophosphate:Pi antiporter (OPA) (TC 2.A.1.4) family.

The protein resides in the cell inner membrane. Responsible for glycerol-3-phosphate uptake. This Haemophilus influenzae (strain ATCC 51907 / DSM 11121 / KW20 / Rd) protein is Glycerol-3-phosphate transporter (glpT).